A 517-amino-acid polypeptide reads, in one-letter code: Crotonobetaine/carnitine--CoA ligase (517 aa).

It belongs to the ATP-dependent AMP-binding enzyme family.

It carries out the reaction 4-(trimethylamino)butanoate + ATP + CoA = 4-(trimethylamino)butanoyl-CoA + AMP + diphosphate. The enzyme catalyses crotonobetaine + ATP + CoA = crotonobetainyl-CoA + AMP + diphosphate. The catalysed reaction is (R)-carnitine + ATP + CoA = (R)-carnitinyl-CoA + AMP + diphosphate. The protein operates within amine and polyamine metabolism; carnitine metabolism. Its function is as follows. Catalyzes the transfer of CoA to carnitine, generating the initial carnitinyl-CoA needed for the CaiB reaction cycle. Also has activity toward crotonobetaine and gamma-butyrobetaine. The polypeptide is Crotonobetaine/carnitine--CoA ligase (Escherichia fergusonii (strain ATCC 35469 / DSM 13698 / CCUG 18766 / IAM 14443 / JCM 21226 / LMG 7866 / NBRC 102419 / NCTC 12128 / CDC 0568-73)).